Consider the following 207-residue polypeptide: MIGRLTGILAEKKAPHLLIDIGGVGYDVIAPMTTFYRLPALGEKAVLHTHFSVSETSQQLFGFSSQQDRELFRMLIKVNGVGPKLAVGIMSMESSDFAKCVLDGNLTALVKLPGVGKKTAERLLVDMRDRVKALDTTPSEHSPTGEGAGIVRVDPVINTNVIIADAESALIGLGYKPTEAAKAVSAAYNDTITTSEDLIRAALKGMI.

The segment at 1–64 (MIGRLTGILA…ETSQQLFGFS (64 aa)) is domain I. Residues 65-142 (SQQDRELFRM…ALDTTPSEHS (78 aa)) are domain II. The flexible linker stretch occupies residues 143 to 157 (PTGEGAGIVRVDPVI). Positions 158-207 (NTNVIIADAESALIGLGYKPTEAAKAVSAAYNDTITTSEDLIRAALKGMI) are domain III.

It belongs to the RuvA family. In terms of assembly, homotetramer. Forms an RuvA(8)-RuvB(12)-Holliday junction (HJ) complex. HJ DNA is sandwiched between 2 RuvA tetramers; dsDNA enters through RuvA and exits via RuvB. An RuvB hexamer assembles on each DNA strand where it exits the tetramer. Each RuvB hexamer is contacted by two RuvA subunits (via domain III) on 2 adjacent RuvB subunits; this complex drives branch migration. In the full resolvosome a probable DNA-RuvA(4)-RuvB(12)-RuvC(2) complex forms which resolves the HJ.

It is found in the cytoplasm. Its function is as follows. The RuvA-RuvB-RuvC complex processes Holliday junction (HJ) DNA during genetic recombination and DNA repair, while the RuvA-RuvB complex plays an important role in the rescue of blocked DNA replication forks via replication fork reversal (RFR). RuvA specifically binds to HJ cruciform DNA, conferring on it an open structure. The RuvB hexamer acts as an ATP-dependent pump, pulling dsDNA into and through the RuvAB complex. HJ branch migration allows RuvC to scan DNA until it finds its consensus sequence, where it cleaves and resolves the cruciform DNA. The chain is Holliday junction branch migration complex subunit RuvA from Saccharophagus degradans (strain 2-40 / ATCC 43961 / DSM 17024).